Reading from the N-terminus, the 534-residue chain is Echilunin cytochrome P450 monooxygenase (534 aa).

A helical transmembrane segment spans residues 18-38 (VSPAALSWAVVAIYLGTFFWL). Cys-441 contributes to the heme binding site.

Belongs to the cytochrome P450 family. Heme is required as a cofactor.

Its subcellular location is the membrane. It catalyses the reaction preechinulin + reduced [NADPH--hemoprotein reductase] + O2 = neoechinulin A + oxidized [NADPH--hemoprotein reductase] + 2 H2O + H(+). It functions in the pathway secondary metabolite biosynthesis. The protein operates within alkaloid biosynthesis. Its function is as follows. Cytochrome P450 monooxygenase; part of the gene cluster that mediates the biosynthesis of echinulin family alkaloid. The pathway begins with the biosynthesis of the cyclic dipeptide cyclo-L-Trp-L-Ala (cyclo-TA) by the NRPS echPS via condensation of L-alanine and L-tryptophan. The prenyltransferase echPT1 then catalyzes the first prenylation step, a reverse prenylation reaction at C2, to yield preechinulin. Preechinulin is the substrate of the cytochrome P450 monooxygenase echP450 that catalyzes the formation of the double bond between C10 and C11 to produce neoechulin A. The unique prenyltransferase echPT2 functions as a competitive enzyme with echP450 for preechinulin metabolization and uses preechinulin for effective regiospecific prenylations. Preechinulin is prenylated by echPT2 at C5 or C7. C7-prenylation leads to accumulation of tardioxopiperazine B without further modification by echPT2. In contrast, the C5-prenylated tardioxopiperazine A can be prenylated again by echPT2, predominantly at C7 to form echinulin or less frequently at C4 to give variecolorin L. EchPT2 also accepts neoechilunin A to produce varlecolorin G (prenylation at C5) or isoechinulin A (prenylation at C7). EchPT2 further converts isoechinulin A into dehydroechinulin. Moreover, a yet unidentified enzyme can also convert neoechilunin A into neoechilunin B by introducing a double bond between positions C14 and C17 and thus provides a further substrate to echPT2 for C5 and C7 prenylation. The chain is Echilunin cytochrome P450 monooxygenase from Aspergillus ruber (strain CBS 135680).